A 393-amino-acid polypeptide reads, in one-letter code: Phospho-N-acetylmuramoyl-pentapeptide-transferase (393 aa).

A run of 10 helical transmembrane segments spans residues 29–49, 75–95, 101–121, 138–158, 193–213, 226–246, 263–283, 290–310, 315–335, and 370–390; these read RAVM…PIVI, TPTM…LLWF, FVWI…VDDW, YFWQ…SVSE, SISY…VIVG, GLAI…AYAT, AGEL…FLWF, VFMG…IAVI, VVLA…MAQV, and QVVV…LSSL.

The protein belongs to the glycosyltransferase 4 family. MraY subfamily. The cofactor is Mg(2+).

The protein resides in the cell inner membrane. It carries out the reaction UDP-N-acetyl-alpha-D-muramoyl-L-alanyl-gamma-D-glutamyl-meso-2,6-diaminopimeloyl-D-alanyl-D-alanine + di-trans,octa-cis-undecaprenyl phosphate = di-trans,octa-cis-undecaprenyl diphospho-N-acetyl-alpha-D-muramoyl-L-alanyl-D-glutamyl-meso-2,6-diaminopimeloyl-D-alanyl-D-alanine + UMP. Its pathway is cell wall biogenesis; peptidoglycan biosynthesis. Functionally, catalyzes the initial step of the lipid cycle reactions in the biosynthesis of the cell wall peptidoglycan: transfers peptidoglycan precursor phospho-MurNAc-pentapeptide from UDP-MurNAc-pentapeptide onto the lipid carrier undecaprenyl phosphate, yielding undecaprenyl-pyrophosphoryl-MurNAc-pentapeptide, known as lipid I. This chain is Phospho-N-acetylmuramoyl-pentapeptide-transferase, found in Methylibium petroleiphilum (strain ATCC BAA-1232 / LMG 22953 / PM1).